A 553-amino-acid polypeptide reads, in one-letter code: Formate--tetrahydrofolate ligase (553 aa).

56 to 63 (TPKGEGKT) is a binding site for ATP.

The protein belongs to the formate--tetrahydrofolate ligase family.

It carries out the reaction (6S)-5,6,7,8-tetrahydrofolate + formate + ATP = (6R)-10-formyltetrahydrofolate + ADP + phosphate. It participates in one-carbon metabolism; tetrahydrofolate interconversion. The sequence is that of Formate--tetrahydrofolate ligase from Haloarcula marismortui (strain ATCC 43049 / DSM 3752 / JCM 8966 / VKM B-1809) (Halobacterium marismortui).